Here is a 197-residue protein sequence, read N- to C-terminus: Lymphotoxin-alpha (197 aa).

The N-terminal stretch at 1–26 is a signal peptide; the sequence is MTPPGRLYLPLLLGLLLAPPPPGAQG. The 143-residue stretch at 55–197 folds into the THD domain; the sequence is PAAHLVGDPS…SSVFFGAFAL (143 aa). N-linked (GlcNAc...) asparagine glycosylation occurs at asparagine 88. The cysteines at positions 112 and 148 are disulfide-linked.

Belongs to the tumor necrosis factor family. Homotrimer, and heterotrimer of either two LTB and one LTA subunits or (less prevalent) two LTA and one LTB subunits. Interacts with TNFRSF14.

It is found in the secreted. It localises to the membrane. Functionally, cytokine that in its homotrimeric form binds to TNFRSF1A/TNFR1, TNFRSF1B/TNFBR and TNFRSF14/HVEM. In its heterotrimeric form with LTB binds to TNFRSF3/LTBR. Lymphotoxin is produced by lymphocytes and is cytotoxic for a wide range of tumor cells in vitro and in vivo. The chain is Lymphotoxin-alpha (LTA) from Oryctolagus cuniculus (Rabbit).